The chain runs to 455 residues: Putative FBD-associated F-box protein At5g56400 (455 aa).

One can recognise an F-box domain in the interval Val32 to Arg81. In terms of domain architecture, FBD spans Trp372–Ser421.

The chain is Putative FBD-associated F-box protein At5g56400 from Arabidopsis thaliana (Mouse-ear cress).